Consider the following 1225-residue polypeptide: ATP-dependent helicase/nuclease subunit A (1225 aa).

Residues 11–478 enclose the UvrD-like helicase ATP-binding domain; the sequence is AQWTDAQWKS…IDLSKNFRSR (468 aa). 32–39 contributes to the ATP binding site; it reads AAAGSGKT. In terms of domain architecture, UvrD-like helicase C-terminal spans 479–790; it reads KEVLATTNYL…RMMTVHSSKG (312 aa). Basic and acidic residues predominate over residues 999–1014; sequence EKPSKQSVSELKRQLE. Positions 999–1018 are disordered; the sequence is EKPSKQSVSELKRQLETEES.

This sequence belongs to the helicase family. AddA subfamily. In terms of assembly, heterodimer of AddA and AddB/RexB. Requires Mg(2+) as cofactor.

The enzyme catalyses Couples ATP hydrolysis with the unwinding of duplex DNA by translocating in the 3'-5' direction.. The catalysed reaction is ATP + H2O = ADP + phosphate + H(+). Functionally, the heterodimer acts as both an ATP-dependent DNA helicase and an ATP-dependent, dual-direction single-stranded exonuclease. Recognizes the chi site generating a DNA molecule suitable for the initiation of homologous recombination. The AddA nuclease domain is required for chi fragment generation; this subunit has the helicase and 3' -&gt; 5' nuclease activities. This chain is ATP-dependent helicase/nuclease subunit A, found in Staphylococcus haemolyticus (strain JCSC1435).